The primary structure comprises 789 residues: MAPAESGVSPRRNPSQLSWMNLSSNLILAYQSFGVVYGDLSTSPLYVFPSTFIGKLHKHHNEDAVFGAFSLIFWTLTLIPLLKYLLVLLSADDNGEGGTFALYSLLCRHAKLSLLPNQQAADEELSAYKFGPSTDTVTSSPFRTFLEKHKRLRTALLLVVLFGAAMVIGDGVLTPALSVLSSLSGLQATEKNVTDGELLVLACVILVGLFALQHCGTHRVAFMFAPIVIIWLISIFFIGLYNIIRWNPKIIHAVSPLYIIKFFRVTGQDGWISLGGVLLSVTGTEAMFANLGHFTSVSIRVAFAVVVYPCLVVQYMGQAAFLSKNLGSIPNSFYDSVPDPVFWPVFVIATLAAIVGSQAVITTTFSIIKQCHALGCFPRIKVVHTSKHIYGQIYIPEINWILMILTLAMAIGFRDTTLIGNAYGIACMVVMFITTFFMALVIVVVWQKSCFLAALFLGTLWIIEGVYLSAALMKVTEGGWVPFVLTFIFMIAMYVWHYGTRRKYSFDLHNKVSLKWLLGLGPSLGIVRVPGIGLVYSELATGVPAIFSHFVTNLPAFHKVVVFVCVKSVPVPHVSPEERFLIGRVCPKPYRMYRCIVRYGYKDIQREDGDFENQLVQSIAEFIQMEASDLQSSASESQSNDGRMAVLSSQKSLSNSILTVSEVEEIDYADPTIQSSKSMTLQSLRSVYEDEYPQGQVRRRHVRFQLTASSGGMGSSVREELMDLIRAKEAGVAYIMGHSYVKSRKSSSWLKKMAIDIGYSFLRKNCRGPAVALNIPHISLIEVGMIYYV.

Residues methionine 1–serine 32 lie on the Cytoplasmic side of the membrane. The residue at position 9 (serine 9) is a Phosphoserine. A helical transmembrane segment spans residues phenylalanine 33–isoleucine 53. Over glycine 54–alanine 68 the chain is Extracellular. The chain crosses the membrane as a helical span at residues phenylalanine 69–leucine 89. At serine 90–threonine 154 the chain is on the cytoplasmic side. A helical membrane pass occupies residues alanine 155–proline 175. At alanine 176–aspartate 195 the chain is on the extracellular side. The chain crosses the membrane as a helical span at residues glycine 196 to glycine 216. Residues threonine 217–arginine 219 are Cytoplasmic-facing. The helical transmembrane segment at valine 220–leucine 240 threads the bilayer. The Extracellular segment spans residues tyrosine 241 to glycine 270. The chain crosses the membrane as a helical span at residues tryptophan 271–leucine 291. The Cytoplasmic portion of the chain corresponds to glycine 292–arginine 300. A helical membrane pass occupies residues valine 301–phenylalanine 321. At leucine 322–proline 340 the chain is on the extracellular side. A helical membrane pass occupies residues valine 341 to isoleucine 361. The Cytoplasmic portion of the chain corresponds to threonine 362 to glutamine 392. Residues isoleucine 393 to phenylalanine 413 traverse the membrane as a helical segment. Residues arginine 414–glycine 424 lie on the Extracellular side of the membrane. The chain crosses the membrane as a helical span at residues isoleucine 425 to valine 445. At tryptophan 446–cysteine 450 the chain is on the cytoplasmic side. The chain crosses the membrane as a helical span at residues phenylalanine 451–alanine 471. Residues leucine 472–glycine 478 are Extracellular-facing. The helical transmembrane segment at glycine 479 to glycine 499 threads the bilayer. At threonine 500–valine 789 the chain is on the cytoplasmic side.

It belongs to the HAK/KUP transporter (TC 2.A.72.3) family. As to expression, detected at very low levels in roots, stems, leaves and flowers of mature plants and strongly expressed in the roots of potassium-starved plants.

The protein resides in the cell membrane. Its function is as follows. High-affinity potassium transporter. The protein is Potassium transporter 4 (POT4) of Arabidopsis thaliana (Mouse-ear cress).